We begin with the raw amino-acid sequence, 747 residues long: Elastin (747 aa).

An N-terminal signal peptide occupies residues methionine 1–proline 26. 3 positions are modified to 4-hydroxyproline: proline 34, proline 65, and proline 87. Allysine occurs at positions 105 and 109. 4-hydroxyproline occurs at positions 165, 178, and 181. Proline 188 bears the Hydroxyproline mark. Proline 201 is subject to 4-hydroxyproline. Lysine 252, lysine 271, and lysine 275 each carry allysine. Residues proline 298 and proline 302 each carry the 4-hydroxyproline modification. Residues lysine 324 and lysine 327 each carry the allysine modification. 6 positions are modified to 4-hydroxyproline: proline 335, proline 365, proline 370, proline 375, proline 380, and proline 385. Allysine occurs at positions 400, 404, 407, 445, and 448. A 4-hydroxyproline mark is found at proline 462 and proline 478. 2 positions are modified to allysine: lysine 489 and lysine 493. At proline 513 the chain carries 4-hydroxyproline. An allysine mark is found at lysine 544, lysine 548, and lysine 552. 5 positions are modified to 4-hydroxyproline: proline 566, proline 575, proline 584, proline 593, and proline 599. Lysine 606 and lysine 609 each carry allysine. Position 630 is a 4-hydroxyproline (proline 630). Allysine occurs at positions 645, 649, 685, and 688. Residues proline 719 and proline 733 each carry the 4-hydroxyproline modification. A disulfide bridge connects residues cysteine 737 and cysteine 742.

This sequence belongs to the elastin family. The polymeric elastin chains are cross-linked together into an extensible 3D network. Forms a ternary complex with BGN and MFAP2. Interacts with MFAP2 via divalent cations (calcium &gt; magnesium &gt; manganese) in a dose-dependent and saturating manner. Interacts with FBLN5 and FBN1. Forms a ternary complex with FBN1 and FBLN2 or FBLN5. Interacts with MFAP4 in a Ca (2+)-dependent manner; this interaction promotes ELN self-assembly. Interacts with EFEMP2 with moderate affinity. Elastin is formed through the cross-linking of its soluble precursor tropoelastin. Cross-linking is initiated through the action of lysyl oxidase on exposed lysines to form allysine. Subsequent spontaneous condensation reactions with other allysine or unmodified lysine residues result in various bi-, tri-, and tetrafunctional cross-links. The most abundant cross-links in mature elastin fibers are lysinonorleucine, allysine aldol, desmosine, and isodesmosine. Post-translationally, hydroxylation on proline residues within the sequence motif, GXPG, is most likely to be 4-hydroxy as this fits the requirement for 4-hydroxylation in vertebrates.

Its subcellular location is the secreted. The protein resides in the extracellular space. The protein localises to the extracellular matrix. In terms of biological role, major structural protein of tissues such as aorta and nuchal ligament, which must expand rapidly and recover completely. Molecular determinant of the late arterial morphogenesis, stabilizing arterial structure by regulating proliferation and organization of vascular smooth muscle. The chain is Elastin (ELN) from Bos taurus (Bovine).